Consider the following 244-residue polypeptide: Protein-L-isoaspartate O-methyltransferase (244 aa).

A disordered region spans residues 1-39 (MINPFSSFRWRHSSRSPAGIPEVEPQPPDASDPFASQRE). Ser-92 is an active-site residue.

Belongs to the methyltransferase superfamily. L-isoaspartyl/D-aspartyl protein methyltransferase family.

The protein localises to the cytoplasm. The enzyme catalyses [protein]-L-isoaspartate + S-adenosyl-L-methionine = [protein]-L-isoaspartate alpha-methyl ester + S-adenosyl-L-homocysteine. In terms of biological role, catalyzes the methyl esterification of L-isoaspartyl residues in peptides and proteins that result from spontaneous decomposition of normal L-aspartyl and L-asparaginyl residues. It plays a role in the repair and/or degradation of damaged proteins. This is Protein-L-isoaspartate O-methyltransferase from Synechococcus sp. (strain JA-2-3B'a(2-13)) (Cyanobacteria bacterium Yellowstone B-Prime).